The chain runs to 124 residues: Fluoride-specific ion channel FluC 2 (124 aa).

The next 4 helical transmembrane spans lie at 9–29, 34–54, 67–87, and 99–119; these read LGIFLAAMLGGLVRYLVSTWL, DFPWGTLFVNYLGIFCLIYLV, LILALGTGFCGGLTTFSSLML, and LSLILYLLLSIGGGLLLAYYL. The Na(+) site is built by G77 and T80.

Belongs to the fluoride channel Fluc/FEX (TC 1.A.43) family.

It is found in the cell membrane. It carries out the reaction fluoride(in) = fluoride(out). Its activity is regulated as follows. Na(+) is not transported, but it plays an essential structural role and its presence is essential for fluoride channel function. Functionally, fluoride-specific ion channel. Important for reducing fluoride concentration in the cell, thus reducing its toxicity. In Streptococcus pneumoniae serotype 4 (strain ATCC BAA-334 / TIGR4), this protein is Fluoride-specific ion channel FluC 2.